Reading from the N-terminus, the 620-residue chain is 1-deoxy-D-xylulose-5-phosphate synthase (620 aa).

Thiamine diphosphate-binding positions include histidine 80 and glycine 121 to serine 123. Aspartate 152 is a binding site for Mg(2+). Thiamine diphosphate-binding positions include glycine 153–alanine 154, asparagine 181, tyrosine 288, and glutamate 370. Asparagine 181 is a binding site for Mg(2+).

Belongs to the transketolase family. DXPS subfamily. As to quaternary structure, homodimer. Requires Mg(2+) as cofactor. Thiamine diphosphate serves as cofactor.

The catalysed reaction is D-glyceraldehyde 3-phosphate + pyruvate + H(+) = 1-deoxy-D-xylulose 5-phosphate + CO2. It participates in metabolic intermediate biosynthesis; 1-deoxy-D-xylulose 5-phosphate biosynthesis; 1-deoxy-D-xylulose 5-phosphate from D-glyceraldehyde 3-phosphate and pyruvate: step 1/1. Catalyzes the acyloin condensation reaction between C atoms 2 and 3 of pyruvate and glyceraldehyde 3-phosphate to yield 1-deoxy-D-xylulose-5-phosphate (DXP). The sequence is that of 1-deoxy-D-xylulose-5-phosphate synthase from Enterobacter sp. (strain 638).